An 837-amino-acid polypeptide reads, in one-letter code: Amyloid-beta A4 precursor protein-binding family A member 1 (837 aa).

Disordered regions lie at residues 1–93 (MNHL…DTAE), 238–342 (YDER…SKEK), and 358–435 (EEVK…ESRK). Positions 23–38 (ESVEADLEHPEVEEEQ) are enriched in acidic residues. Phosphoserine occurs at positions 78, 242, 246, 248, 263, 280, and 285. Residues 226–314 (YRQEALGARL…TPAGGRPDSP (89 aa)) form a munc-18-1 binding region. Basic and acidic residues predominate over residues 238–254 (YDERSDGESDSPEKEAE). Threonine 305 carries the post-translational modification Phosphothreonine. Phosphoserine occurs at positions 313 and 367. Threonine 370 is modified (phosphothreonine). Residues 373-436 (EPKEPIWVMR…ASTNKESRKS (64 aa)) form an LIN-2/CASK binding region. Basic and acidic residues predominate over residues 387–398 (PTRDCDDQRPMD). Positions 399–418 (GDSPSPGSSSPLGAESSSTS) are enriched in low complexity. Serine 401, serine 403, serine 408, and serine 568 each carry phosphoserine. The region spanning 457 to 643 (DGIIFAANYL…LLNTQDMYND (187 aa)) is the PID domain. Residues 626–641 (LSQKEYSDLLNTQDMY) are autoinhibitory helix linker. 2 consecutive PDZ domains span residues 656–742 (DVFI…IVRC) and 747–822 (TVLI…TMPA).

In terms of assembly, part of a multimeric complex containing STXBP1 and STX1A. Interacts with STXBP1. Also part of the brain-specific heterotrimeric complex LIN-10/X11-alpha, LIN-2/CASK, and LIN7. Component of the brain-specific heterotrimeric complex (LIN-10-LIN-2-LIN-7 complex) composed of at least APBA1, CASK, and LIN7, which associates with the motor protein KIF17 to transport vesicles along microtubules. Within the complex, interacts (via PDZ domain) with the motor protein KIF17; the interaction is direct and is required for association of KIF17 with the cargo that is to be transported. Both isoform 1 and isoform 2 bind to the cytoplasmic domain of amyloid protein (APP). Interacts (via PDZ 1 and 2 domains) with FSPB. Isoform 2, but not isoform 1, interacts (via its truncated PID domain) with active, GTP-bound RAB6A and RAB6B. Brain and spinal cord. Isoform 2 is expressed in testis and brain, but not detected in lung, liver or spleen.

It localises to the cytoplasm. It is found in the perinuclear region. Its subcellular location is the nucleus. The protein resides in the golgi apparatus. Its function is as follows. Putative function in synaptic vesicle exocytosis by binding to Munc18-1, an essential component of the synaptic vesicle exocytotic machinery. May modulate processing of the amyloid-beta precursor protein (APP) and hence formation of APP-beta. Component of the LIN-10-LIN-2-LIN-7 complex, which associates with the motor protein KIF17 to transport vesicles containing N-methyl-D-aspartate (NMDA) receptor subunit NR2B along microtubules. In Homo sapiens (Human), this protein is Amyloid-beta A4 precursor protein-binding family A member 1 (APBA1).